The following is a 463-amino-acid chain: MEKPSREAFEGNNKLLIGIVLSVITFWLFAQSLVNVVPILEDSFNTDIGTVNIAVSITALFSGMFVVGAGGLADKYGRIKLTNIGIILNILGSLLIIISNIPLLLIIGRLIQGLSAACIMPATLSIIKSYYIGKDRQRALSYWSIGSWGGSGVCSFFGGAVATLLGWRWIFILSIIISLIALFLIKGTPETKSKSISLNKFDIKGLVLLVIMLLSLNILITKGSELGVTSLLFITLLAIAIGSFSLFIVLEKRATNPLIDFKLFKNKAYTGATASNFLLNGVAGTLIVANTFVQRGLGYSSLQAGSLSITYLVMVLIMIRVGEKLLQTLGCKKPMLIGTGVLIVGECLISLTFLPEIFYVICCIIGYLFFGLGLGIYATPSTDTAIANAPLEKVGVAAGIYKMASALGGAFGVALSGAVYAIVSNMTNIYTGAMIALWLNAAMGILSFVIILLLVPKQNDTQL.

The next 14 membrane-spanning stretches (helical) occupy residues 17 to 37 (IGIV…VNVV), 53 to 73 (IAVS…GGLA), 86 to 106 (IILN…LLLI), 107 to 127 (IGRL…LSII), 142 to 162 (YWSI…GAVA), 165 to 185 (LGWR…LFLI), 201 to 221 (FDIK…ILIT), 230 to 250 (SLLF…FIVL), 273 to 293 (TASN…NTFV), 299 to 319 (YSSL…LIMI), 334 to 354 (PMLI…LTFL), 357 to 377 (IFYV…LGIY), 403 to 423 (MASA…YAIV), and 435 to 455 (IALW…LLLV).

This sequence belongs to the major facilitator superfamily. TCR/Tet family.

The protein localises to the cell membrane. Its function is as follows. Multidrug efflux pump that acts independently of NorA and is one of the factors that confers resistance against diverse quinolones and chemical compounds. This Staphylococcus aureus (strain COL) protein is Quinolone resistance protein NorB (norB).